A 194-amino-acid polypeptide reads, in one-letter code: Putative manganese efflux pump MntP (194 aa).

Helical transmembrane passes span 2–22, 43–63, 67–87, 111–131, 137–157, and 174–194; these read ISII…AFAV, LWFG…ASTF, VTQF…GNMV, PLAV…AFMF, AFAI…GLHI, and GVVL…VIAF.

This sequence belongs to the MntP (TC 9.B.29) family.

The protein localises to the cell membrane. Its function is as follows. Probably functions as a manganese efflux pump. The chain is Putative manganese efflux pump MntP from Bifidobacterium longum (strain DJO10A).